Consider the following 1256-residue polypeptide: GPI inositol-deacylase (1256 aa).

The span at 37–48 (DVYANSTTNATA) shows a compositional bias: polar residues. The disordered stretch occupies residues 37–203 (DVYANSTTNA…MEKEEEQKFV (167 aa)). 2 N-linked (GlcNAc...) asparagine glycosylation sites follow: N41 and N45. The span at 59–68 (PRPSRPSQSS) shows a compositional bias: low complexity. A compositionally biased stretch (polar residues) spans 69–83 (AAERTSPESPSVRQS). The span at 107 to 135 (QSPSQQSQNQQQQQQQQQQQQQQQQQQQS) shows a compositional bias: low complexity. Polar residues predominate over residues 143–156 (SGNFNWKLSHSRNG). N-linked (GlcNAc...) asparagine glycosylation is present at N155. Residues 165–180 (FFSSSFSHSPSTPPLS) are compositionally biased toward low complexity. Residues 190 to 202 (HSKEMEKEEEQKF) are compositionally biased toward basic and acidic residues. The chain crosses the membrane as a helical span at residues 214–234 (AITFVTLLISILGIGFLALVL). N-linked (GlcNAc...) asparagine glycosylation is present at N235. S397 is an active-site residue. N582 is a glycosylation site (N-linked (GlcNAc...) asparagine). Transmembrane regions (helical) follow at residues 882-902 (LYMR…TLVL) and 929-949 (SIPL…NSSS). Residue N960 is glycosylated (N-linked (GlcNAc...) asparagine). The next 6 membrane-spanning stretches (helical) occupy residues 980-1000 (PFFW…CTVF), 1005-1025 (LTLV…PGWI), 1053-1073 (ILLV…VCCL), 1103-1123 (SILL…VVWI), 1130-1150 (WLTP…IILV), and 1172-1192 (VLLF…AYML). Residues N1212, N1239, and N1242 are each glycosylated (N-linked (GlcNAc...) asparagine).

The protein belongs to the GPI inositol-deacylase family.

The protein resides in the endoplasmic reticulum membrane. Functionally, involved in inositol deacylation of GPI-anchored proteins which plays important roles in the quality control and ER-associated degradation of GPI-anchored proteins. This Neurospora crassa (strain ATCC 24698 / 74-OR23-1A / CBS 708.71 / DSM 1257 / FGSC 987) protein is GPI inositol-deacylase (bst-1).